Here is a 100-residue protein sequence, read N- to C-terminus: RxLR effector protein Avrblb2 (100 aa).

The N-terminal stretch at 1–22 (MRSFLYGVLAFAVLARSSAVAA) is a signal peptide. A RxLR-dEER motif is present at residues 43–57 (RSLRIEAQEVIQSGR). The Calmodulin-binding motif signature appears at 78–82 (RPDIK).

The protein belongs to the RxLR effector family. In terms of assembly, interacts with the host papain-like cysteine protease C14. Interacts with the host calmodulin.

It is found in the secreted. The protein resides in the host cell membrane. Functionally, secreted effector that acts as an elicitor of hypersensitive response (HR) specifically on plants carrying defense protein Rpi-blb2. Enhances P.infestans colonization of Nicotiana benthamiana leaves. Interacts with, and subsequently prevents secretion into the apoplast of the host papain-like cysteine protease C14, thus promoting virulence by interfering with the execution of host defenses. Associates with calmodulin at the host plasma membrane to interfere with plant defense-associated calcium signaling in hosts. This Phytophthora infestans (strain T30-4) (Potato late blight agent) protein is RxLR effector protein Avrblb2.